The sequence spans 212 residues: MLAYSVTSSGLFPRMLWALLLLAASLNAHNDVWDEPCCTEHEVSVNRGSRVVMACNISNNLRDVTIELVTSEKTSIIFNHTPPGNYSKDSWQLHIQGVQAQLVITDAQDKHSGNYSWKLHGFQAEFKNFNLTVNAADRQKTEDLPVTKVPDKPPTAVRTEVIIIIAIATTIIITGIGVFVWYKQFPVAPQIQMSVPCLIHGSPGIPYLTLPP.

A signal peptide spans methionine 1 to alanine 28. The Extracellular segment spans residues histidine 29 to glutamate 160. Cysteine 38 and cysteine 55 are oxidised to a cystine. 4 N-linked (GlcNAc...) asparagine glycosylation sites follow: asparagine 56, asparagine 85, asparagine 114, and asparagine 130. The chain crosses the membrane as a helical span at residues valine 161–tryptophan 181. Residues tyrosine 182 to proline 212 are Cytoplasmic-facing.

This sequence belongs to the SECTM family. As to quaternary structure, interacts with CD7.

The protein localises to the cell membrane. It localises to the secreted. Functionally, may be involved in thymocyte signaling. This Mus musculus (Mouse) protein is Secreted and transmembrane protein 1b (Sectm1b).